Here is a 200-residue protein sequence, read N- to C-terminus: THO complex subunit tho5 (200 aa).

This sequence belongs to the THOC5 family. Component of the THO and TREX complexes.

It is found in the cytoplasm. Its subcellular location is the nucleus. Component the THO subcomplex of the TREX complex, which operates in coupling transcription elongation to mRNA export. The THO complex is recruited to transcribed genes and moves along the gene with the elongating polymerase during transcription. THO is important for stabilizing nascent RNA in the RNA polymerase II elongation complex by preventing formation of DNA:RNA hybrids behind the elongating polymerase. The THO complex is also required to maintain TRAMP complex occupancy at sites of snoRNA transcription thus promoting exosome-mediated degradation of snoRNA precursors. The sequence is that of THO complex subunit tho5 from Schizosaccharomyces pombe (strain 972 / ATCC 24843) (Fission yeast).